The following is a 275-amino-acid chain: Autophagy protein 5 (275 aa).

At M1 the chain carries N-acetylmethionine. K130 participates in a covalent cross-link: Glycyl lysine isopeptide (Lys-Gly) (interchain with G-Cter in ATG12).

The protein belongs to the ATG5 family. As to quaternary structure, forms a conjugate with ATG12. Part of the minor complex composed of 4 sets of ATG12-ATG5 and ATG16L1 (400 kDa); this complex interacts with ATG3 leading to disruption of ATG7 interaction and promotion of ATG8-like proteins lipidation. Forms an 800-kDa complex composed of ATG12-ATG5 and ATG16L2. The ATG12-ATG5 conjugate interacts with RAB33A; this interaction is bridged by ATG16L1 and promotes ATG12-ATG5-ATG16L1 complex recruitment to phagophores. Interacts with TECPR1; the interaction is direct and does not take place when ATG16L1 is associated with the ATG5-ATG12 conjugate. Interacts with DHX58/RIG-1, IFIH1/MDA5 and MAVS/IPS-1 in monomeric form as well as in ATG12-ATG5 conjugate form. The interaction with MAVS is further enhanced upon vesicular stomatitis virus (VSV) infection. Interacts with ATG3. Interacts with ATG7 and ATG10. Interacts with FADD. Interacts with Bassoon/BSN; this interaction is important for the regulation of presynaptic autophagy. Interacts with ATG16L2. In terms of processing, conjugated to ATG12; which is essential for autophagy, but is not required for association with isolation membrane. Acetylated by EP300.

The protein resides in the cytoplasm. The protein localises to the preautophagosomal structure membrane. Functionally, involved in autophagic vesicle formation. Conjugation with ATG12, through a ubiquitin-like conjugating system involving ATG7 as an E1-like activating enzyme and ATG10 as an E2-like conjugating enzyme, is essential for its function. The ATG12-ATG5 conjugate acts as an E3-like enzyme which is required for lipidation of ATG8 family proteins and their association to the vesicle membranes. Involved in mitochondrial quality control after oxidative damage, and in subsequent cellular longevity. Plays a critical role in multiple aspects of lymphocyte development and is essential for both B and T lymphocyte survival and proliferation. Required for optimal processing and presentation of antigens for MHC II. Involved in the maintenance of axon morphology and membrane structures, as well as in normal adipocyte differentiation. Promotes primary ciliogenesis through removal of OFD1 from centriolar satellites and degradation of IFT20 via the autophagic pathway. As part of the ATG8 conjugation system with ATG12 and ATG16L1, required for recruitment of LRRK2 to stressed lysosomes and induction of LRRK2 kinase activity in response to lysosomal stress. May play an important role in the apoptotic process, possibly within the modified cytoskeleton. Its expression is a relatively late event in the apoptotic process, occurring downstream of caspase activity. Plays a crucial role in IFN-gamma-induced autophagic cell death by interacting with FADD. This chain is Autophagy protein 5, found in Pongo abelii (Sumatran orangutan).